The chain runs to 130 residues: Phosphoribosyl-AMP cyclohydrolase (130 aa).

Mg(2+) is bound at residue aspartate 77. Position 78 (cysteine 78) interacts with Zn(2+). The Mg(2+) site is built by aspartate 79 and aspartate 81. Positions 95 and 102 each coordinate Zn(2+).

It belongs to the PRA-CH family. As to quaternary structure, homodimer. The cofactor is Mg(2+). Requires Zn(2+) as cofactor.

Its subcellular location is the cytoplasm. The catalysed reaction is 1-(5-phospho-beta-D-ribosyl)-5'-AMP + H2O = 1-(5-phospho-beta-D-ribosyl)-5-[(5-phospho-beta-D-ribosylamino)methylideneamino]imidazole-4-carboxamide. It functions in the pathway amino-acid biosynthesis; L-histidine biosynthesis; L-histidine from 5-phospho-alpha-D-ribose 1-diphosphate: step 3/9. Catalyzes the hydrolysis of the adenine ring of phosphoribosyl-AMP. The polypeptide is Phosphoribosyl-AMP cyclohydrolase (Pseudomonas syringae pv. syringae (strain B728a)).